Here is a 387-residue protein sequence, read N- to C-terminus: Pepsin A (387 aa).

Positions 1-15 are cleaved as a signal peptide; that stretch reads MKWLLLLSLVALSEC. The propeptide at 16-61 is activation peptide; the sequence is LYKVSLIKKKSLRKNLIEHGLLKDFLKNNTLDPASKYFPQGEAATM. Positions 75–384 constitute a Peptidase A1 domain; the sequence is YFGTIGIGTP…DRANNQVGLA (310 aa). D93 is a catalytic residue. Cysteines 106 and 111 form a disulfide. The residue at position 129 (S129) is a Phosphoserine. The cysteines at positions 267 and 271 are disulfide-linked. Residue D276 is part of the active site. C310 and C343 form a disulfide bridge.

This sequence belongs to the peptidase A1 family.

It is found in the secreted. The enzyme catalyses Preferential cleavage: hydrophobic, preferably aromatic, residues in P1 and P1' positions. Cleaves 1-Phe-|-Val-2, 4-Gln-|-His-5, 13-Glu-|-Ala-14, 14-Ala-|-Leu-15, 15-Leu-|-Tyr-16, 16-Tyr-|-Leu-17, 23-Gly-|-Phe-24, 24-Phe-|-Phe-25 and 25-Phe-|-Tyr-26 bonds in the B chain of insulin.. Its activity is regulated as follows. Inhibited by pepstatin. Its function is as follows. Shows particularly broad specificity; although bonds involving phenylalanine and leucine are preferred, many others are also cleaved to some extent. This chain is Pepsin A (PGA), found in Callithrix jacchus (White-tufted-ear marmoset).